Reading from the N-terminus, the 248-residue chain is Probable transcriptional regulatory protein BARBAKC583_0163 (248 aa).

It belongs to the TACO1 family.

It localises to the cytoplasm. In Bartonella bacilliformis (strain ATCC 35685 / KC583 / Herrer 020/F12,63), this protein is Probable transcriptional regulatory protein BARBAKC583_0163.